A 284-amino-acid chain; its full sequence is L-ribulose-5-phosphate 3-epimerase UlaE (284 aa).

This sequence belongs to the L-ribulose-5-phosphate 3-epimerase family.

It carries out the reaction L-ribulose 5-phosphate = L-xylulose 5-phosphate. It functions in the pathway cofactor degradation; L-ascorbate degradation; D-xylulose 5-phosphate from L-ascorbate: step 3/4. Its function is as follows. Catalyzes the isomerization of L-xylulose-5-phosphate to L-ribulose-5-phosphate. Is involved in the anaerobic L-ascorbate utilization. In Shigella flexneri serotype 5b (strain 8401), this protein is L-ribulose-5-phosphate 3-epimerase UlaE.